A 432-amino-acid chain; its full sequence is Amino-acid acetyltransferase (432 aa).

Residues E286–S425 enclose the N-acetyltransferase domain.

It belongs to the acetyltransferase family. ArgA subfamily.

The protein localises to the cytoplasm. The enzyme catalyses L-glutamate + acetyl-CoA = N-acetyl-L-glutamate + CoA + H(+). It participates in amino-acid biosynthesis; L-arginine biosynthesis; N(2)-acetyl-L-ornithine from L-glutamate: step 1/4. This Pseudomonas fluorescens (strain Pf0-1) protein is Amino-acid acetyltransferase.